The primary structure comprises 69 residues: uncharacterized protein (69 aa).

This is an uncharacterized protein from Mycobacterium tuberculosis (strain ATCC 25618 / H37Rv).